Consider the following 625-residue polypeptide: tRNA-guanine(15) transglycosylase (625 aa).

Residue Asp86 is the Nucleophile of the active site. Asp121 and Gly184 together coordinate substrate. The PUA domain occupies 546-621 (GLRVVVDDES…VAVKVHEGVN (76 aa)).

This sequence belongs to the archaeosine tRNA-ribosyltransferase family. Requires Zn(2+) as cofactor.

It catalyses the reaction guanosine(15) in tRNA + 7-cyano-7-deazaguanine = 7-cyano-7-carbaguanosine(15) in tRNA + guanine. Its pathway is tRNA modification; archaeosine-tRNA biosynthesis. Exchanges the guanine residue with 7-cyano-7-deazaguanine (preQ0) at position 15 in the dihydrouridine loop (D-loop) of archaeal tRNAs. This chain is tRNA-guanine(15) transglycosylase, found in Picrophilus torridus (strain ATCC 700027 / DSM 9790 / JCM 10055 / NBRC 100828 / KAW 2/3).